A 330-amino-acid chain; its full sequence is Ketol-acid reductoisomerase (NADP(+)) (330 aa).

The KARI N-terminal Rossmann domain maps to 1–181 (MNVYYEQDAD…GGAKAGVIET (181 aa)). NADP(+)-binding positions include 24–27 (YGSQ), arginine 47, serine 50, serine 52, and 82–85 (DQYQ). Residue histidine 107 is part of the active site. Glycine 133 lines the NADP(+) pocket. Positions 182–327 (TIKNETETDL…AKLRNMMSWL (146 aa)) constitute a KARI C-terminal knotted domain. Mg(2+)-binding residues include aspartate 190, glutamate 194, glutamate 226, and glutamate 230. Serine 251 is a binding site for substrate.

It belongs to the ketol-acid reductoisomerase family. The cofactor is Mg(2+).

It carries out the reaction (2R)-2,3-dihydroxy-3-methylbutanoate + NADP(+) = (2S)-2-acetolactate + NADPH + H(+). It catalyses the reaction (2R,3R)-2,3-dihydroxy-3-methylpentanoate + NADP(+) = (S)-2-ethyl-2-hydroxy-3-oxobutanoate + NADPH + H(+). It participates in amino-acid biosynthesis; L-isoleucine biosynthesis; L-isoleucine from 2-oxobutanoate: step 2/4. The protein operates within amino-acid biosynthesis; L-valine biosynthesis; L-valine from pyruvate: step 2/4. Its function is as follows. Involved in the biosynthesis of branched-chain amino acids (BCAA). Catalyzes an alkyl-migration followed by a ketol-acid reduction of (S)-2-acetolactate (S2AL) to yield (R)-2,3-dihydroxy-isovalerate. In the isomerase reaction, S2AL is rearranged via a Mg-dependent methyl migration to produce 3-hydroxy-3-methyl-2-ketobutyrate (HMKB). In the reductase reaction, this 2-ketoacid undergoes a metal-dependent reduction by NADPH to yield (R)-2,3-dihydroxy-isovalerate. The polypeptide is Ketol-acid reductoisomerase (NADP(+)) (Chlorobium phaeovibrioides (strain DSM 265 / 1930) (Prosthecochloris vibrioformis (strain DSM 265))).